A 621-amino-acid chain; its full sequence is Phosphatidylinositol-3,5-bisphosphate 3-phosphatase MTMR6 (621 aa).

Positions 1–101 constitute a GRAM domain; that stretch reads MEHIRTTKVE…YNSLLQLSKQ (101 aa). Residues 2-141 are interaction with RAB1B; the sequence is EHIRTTKVEQ…EEYKRMGVPN (140 aa). Tyr-108 carries the phosphotyrosine modification. The Myotubularin phosphatase domain maps to 124–499; that stretch reads GWQLIDLAEE…FNFKFWRNMY (376 aa). Residues Asn-248, Asn-273, and Ile-274 each contribute to the a 1,2-diacyl-sn-glycero-3-phospho-(1D-myo-inositol-3,5-bisphosphate) site. The a 1,2-diacyl-sn-glycero-3-phospho-(1D-myo-inositol-3-phosphate) site is built by Asn-248, Asn-273, and Ile-274. Catalysis depends on Cys-336, which acts as the Phosphocysteine intermediate. A 1,2-diacyl-sn-glycero-3-phospho-(1D-myo-inositol-3,5-bisphosphate)-binding residues include Ser-337, Asp-338, Gly-339, Trp-340, Asp-341, Arg-342, Lys-378, and Arg-382. The a 1,2-diacyl-sn-glycero-3-phospho-(1D-myo-inositol-3-phosphate) site is built by Ser-337, Asp-338, Gly-339, Trp-340, Asp-341, and Arg-342. Arg-382 provides a ligand contact to a 1,2-diacyl-sn-glycero-3-phospho-(1D-myo-inositol-3-phosphate). Phosphoserine is present on residues Ser-556, Ser-561, Ser-589, and Ser-611.

This sequence belongs to the protein-tyrosine phosphatase family. Non-receptor class myotubularin subfamily. In terms of assembly, homodimer. Heterodimer (via C-terminus) with MTMR9 (via C-terminus). Interacts with ALKBH4. Interacts with KCNN4. Interacts (via GRAM domain) with RAB1B (in GDP-bound form); the interaction regulates MTMR6 recruitment to the endoplasmic reticulum-Golgi intermediate compartment. As to expression, expressed in CD4+ T-cells.

The protein resides in the cytoplasm. It localises to the endoplasmic reticulum-Golgi intermediate compartment. Its subcellular location is the endoplasmic reticulum. The protein localises to the cell projection. It is found in the ruffle membrane. The protein resides in the perinuclear region. The catalysed reaction is a 1,2-diacyl-sn-glycero-3-phospho-(1D-myo-inositol-3,5-bisphosphate) + H2O = a 1,2-diacyl-sn-glycero-3-phospho-(1D-myo-inositol-5-phosphate) + phosphate. The enzyme catalyses a 1,2-diacyl-sn-glycero-3-phospho-(1D-myo-inositol-3-phosphate) + H2O = a 1,2-diacyl-sn-glycero-3-phospho-(1D-myo-inositol) + phosphate. It carries out the reaction 1,2-dioctanoyl-sn-glycero-3-phospho-(1D-myo-inositol-3,5-bisphosphate) + H2O = 1,2-dioctanoyl-sn-glycero-3-phospho-(1D-myo-inositol-5-phosphate) + phosphate. It catalyses the reaction 1,2-dioctanoyl-sn-glycero-3-phospho-(1-D-myo-inositol-3-phosphate) + H2O = 1,2-dioctanoyl-sn-glycero-3-phospho-(1D-myo-inositol) + phosphate. With respect to regulation, allosterically activated by phosphatidylserine and/or phosphatidylinositol 4-phosphate (PtdIns(4)P), and phosphatidylinositol 5-phosphate (PtdIns(5)P). Interaction with MTMR9 increases catalytic activity towards phosphatidylinositol 3,5-bisphosphate. Lipid phosphatase that specifically dephosphorylates the D-3 position of phosphatidylinositol 3-phosphate and phosphatidylinositol 3,5-bisphosphate, generating phosphatidylinositol and phosphatidylinositol 5-phosphate. Binds with high affinity to phosphatidylinositol 3,5-bisphosphate (PtdIns(3,5)P2) but also to phosphatidylinositol 3-phosphate (PtdIns(3)P), phosphatidylinositol 4-phosphate (PtdIns(4)P), and phosphatidylinositol 5-phosphate (PtdIns(5)P), phosphatidic acid and phosphatidylserine. Negatively regulates ER-Golgi protein transport. Probably in association with MTMR9, plays a role in the late stages of macropinocytosis by dephosphorylating phosphatidylinositol 3-phosphate in membrane ruffles. Acts as a negative regulator of KCNN4/KCa3.1 channel activity in CD4(+) T-cells possibly by decreasing intracellular levels of phosphatidylinositol 3-phosphate. Negatively regulates proliferation of reactivated CD4(+) T-cells. In complex with MTMR9, negatively regulates DNA damage-induced apoptosis. The formation of the MTMR6-MTMR9 complex stabilizes both MTMR6 and MTMR9 protein levels. The chain is Phosphatidylinositol-3,5-bisphosphate 3-phosphatase MTMR6 from Homo sapiens (Human).